Consider the following 419-residue polypeptide: Aminoacyltransferase FemB (419 aa).

It belongs to the FemABX family. As to quaternary structure, homodimer. Interacts with FemA.

It localises to the cytoplasm. The enzyme catalyses MurNAc-L-Ala-D-isoglutaminyl-L-Lys-(N(6)-tri-Gly)-D-Ala-D-Ala-diphospho-di-trans,octa-cis-undecaprenyl-GlcNAc + 2 glycyl-tRNA(Gly) = MurNAc-L-Ala-D-isoglutaminyl-L-Lys-(N(6)-penta-Gly)-D-Ala-D-Ala-diphospho-di-trans,octa-cis-undecaprenyl-GlcNAc + 2 tRNA(Gly) + 2 H(+). Its function is as follows. Catalyzes the formation of the pentaglycine interpeptide bridge, which is characteristic of the S.aureus peptidoglycan. Adds glycines 4 and 5 of the pentaglycine bridge, using glycyl-tRNA(Gly) as donor. Involved in resistance to methicillin. This Staphylococcus aureus (strain NCTC 8325 / PS 47) protein is Aminoacyltransferase FemB (femB).